The sequence spans 563 residues: Germacrene C/D synthase (563 aa).

Positions 1–22 (MESCLSVSSAPPPKKNIQEPVR) are disordered. The Mg(2+) site is built by D315, D319, and E468. Positions 315–319 (DDTYD) match the DDXXD motif motif.

This sequence belongs to the terpene synthase family. It depends on Mg(2+) as a cofactor. Predominantly expressed in root.

The enzyme catalyses (2E,6E)-farnesyl diphosphate = germacrene C + diphosphate. It carries out the reaction (2E,6E)-farnesyl diphosphate = (-)-germacrene D + diphosphate. Its function is as follows. Mediates formation of germacrene C and germacrene D using farnesyl diphosphate as substrate. Can also catalyze formation of trace of germacrene B. The protein is Germacrene C/D synthase (TPS1) of Valeriana officinalis (Valerian).